Consider the following 354-residue polypeptide: Glycine betaine/proline betaine transport system permease protein ProW (354 aa).

The tract at residues 1 to 28 (MADQTNPWDTAQVADTTTQTADAWGTPA) is disordered. Residues 1 to 99 (MADQTNPWDT…VDYILNGFQQ (99 aa)) lie on the Cytoplasmic side of the membrane. Residues 9–23 (DTAQVADTTTQTADA) are compositionally biased toward low complexity. Residues 100–120 (LLLGMPAPVAIILFALIAWQV) form a helical membrane-spanning segment. Position 121 (Ser-121) is a topological domain, periplasmic. The helical transmembrane segment at 122-142 (GVGMGIATLISLIAIGAIGAW) threads the bilayer. The Cytoplasmic segment spans residues 143–148 (SQAMIT). An ABC transmembrane type-1 domain is found at 145 to 324 (AMITLALVLT…ILAIILDRLT (180 aa)). Residues 149–169 (LALVLTALLFCVVIGLPMGIW) traverse the membrane as a helical segment. The Periplasmic segment spans residues 170–198 (LARSPRAAKIVRPLLDAMQTTPAFVYLVP). The chain crosses the membrane as a helical span at residues 199-219 (IVMLFGIGNVPGVVVTIIFAL). At 220–270 (PPIVRLTILGINQVPADLIEASRSFGASPRQMLFKVQLPLAMPTIMAGVNQ) the chain is on the cytoplasmic side. Residues 271 to 291 (TLMLALSMVVIASMIAVGGLG) traverse the membrane as a helical segment. The Periplasmic segment spans residues 292-300 (QMVLRGIGR). The chain crosses the membrane as a helical span at residues 301–321 (LDMGLATVGGVGIVILAIILD). Over 322 to 354 (RLTQAVGRDSRSRGNRRWYTTGPVGLITRPFVK) the chain is Cytoplasmic.

The protein belongs to the binding-protein-dependent transport system permease family. CysTW subfamily. As to quaternary structure, the complex is composed of two ATP-binding proteins (ProV), two transmembrane proteins (ProW) and a solute-binding protein (ProX).

It is found in the cell inner membrane. Its function is as follows. Part of the ProU ABC transporter complex involved in glycine betaine and proline betaine uptake. Probably responsible for the translocation of the substrate across the membrane. The sequence is that of Glycine betaine/proline betaine transport system permease protein ProW from Salmonella typhimurium (strain LT2 / SGSC1412 / ATCC 700720).